Reading from the N-terminus, the 449-residue chain is Aminopeptidase C (449 aa).

Residues cysteine 70, histidine 364, and asparagine 385 contribute to the active site.

It belongs to the peptidase C1 family. As to quaternary structure, homohexamer.

It localises to the cytoplasm. It carries out the reaction Inactivates bleomycin B2 (a cytotoxic glycometallopeptide) by hydrolysis of a carboxyamide bond of beta-aminoalanine, but also shows general aminopeptidase activity. The specificity varies somewhat with source, but amino acid arylamides of Met, Leu and Ala are preferred.. This Lactobacillus helveticus (Lactobacillus suntoryeus) protein is Aminopeptidase C (pepC).